We begin with the raw amino-acid sequence, 384 residues long: Dual specificity protein phosphatase 9 (384 aa).

S16 is modified (phosphoserine). One can recognise a Rhodanese domain in the interval 18–139; that stretch reads PRPRLLLLDC…FQAECPHLCE (122 aa). The Tyrosine-protein phosphatase domain maps to 203 to 346; that stretch reads FPVQILPNLY…LLDFERSLRL (144 aa). The residue at position 262 (S262) is a Phosphoserine. C290 (phosphocysteine intermediate) is an active-site residue. Residues 348-384 are disordered; sequence ERHSQEQGSGGQASAASNPPSFFTTPTSDGAFELAPT. At S351 the chain carries Phosphoserine. The segment covering 359 to 375 has biased composition (polar residues); that stretch reads QASAASNPPSFFTTPTS.

This sequence belongs to the protein-tyrosine phosphatase family. Non-receptor class dual specificity subfamily.

The protein localises to the cytoplasm. The enzyme catalyses O-phospho-L-tyrosyl-[protein] + H2O = L-tyrosyl-[protein] + phosphate. It catalyses the reaction O-phospho-L-seryl-[protein] + H2O = L-seryl-[protein] + phosphate. The catalysed reaction is O-phospho-L-threonyl-[protein] + H2O = L-threonyl-[protein] + phosphate. Its function is as follows. Inactivates MAP kinases. Has a specificity for the ERK family. The sequence is that of Dual specificity protein phosphatase 9 (DUSP9) from Homo sapiens (Human).